A 761-amino-acid chain; its full sequence is 5-methyltetrahydropteroyltriglutamate--homocysteine methyltransferase (761 aa).

5-methyltetrahydropteroyltri-L-glutamate is bound by residues 16 to 19 and K116; that span reads RELK. L-homocysteine contacts are provided by residues 437–439 and E490; that span reads IGS. Residues 437–439 and E490 contribute to the L-methionine site; that span reads IGS. Residues 521-522 and W567 contribute to the 5-methyltetrahydropteroyltri-L-glutamate site; that span reads RC. D605 is a binding site for L-homocysteine. D605 contacts L-methionine. E611 contributes to the 5-methyltetrahydropteroyltri-L-glutamate binding site. The Zn(2+) site is built by H647, C649, and E671. H700 (proton donor) is an active-site residue. C732 contributes to the Zn(2+) binding site.

Belongs to the vitamin-B12 independent methionine synthase family. Zn(2+) is required as a cofactor.

It carries out the reaction 5-methyltetrahydropteroyltri-L-glutamate + L-homocysteine = tetrahydropteroyltri-L-glutamate + L-methionine. The protein operates within amino-acid biosynthesis; L-methionine biosynthesis via de novo pathway; L-methionine from L-homocysteine (MetE route): step 1/1. In terms of biological role, catalyzes the transfer of a methyl group from 5-methyltetrahydrofolate to homocysteine resulting in methionine formation. The protein is 5-methyltetrahydropteroyltriglutamate--homocysteine methyltransferase of Chromohalobacter salexigens (strain ATCC BAA-138 / DSM 3043 / CIP 106854 / NCIMB 13768 / 1H11).